The following is a 149-amino-acid chain: Extracellular protease inhibitor 1 (149 aa).

Positions 1–16 are cleaved as a signal peptide; the sequence is MKSALLFTLVVAAVHA. Kazal-like domains are found at residues 29–86 and 88–141; these read ESNE…SSTG and QPPS…ACVG. Cystine bridges form between Cys35–Cys65 and Cys39–Cys58. An N-linked (GlcNAc...) asparagine glycan is attached at Asn67. 3 disulfide bridges follow: Cys94/Cys124, Cys98/Cys117, and Cys106/Cys139.

In terms of assembly, interacts with host subtilisin-like protease P69B.

The protein resides in the secreted. Functionally, secreted effector that interacts with and inhibits the pathogenesis-related P69B subtilisin-like serine protease of host tomato. Inhibition of host proteases by a pathogen extracellular protease inhibitor forms a specific type of defense-counterdefense mechanism between plants and microbial pathogens. The polypeptide is Extracellular protease inhibitor 1 (Phytophthora infestans (Potato late blight agent)).